The primary structure comprises 172 residues: Crossover junction endodeoxyribonuclease RuvC (172 aa).

Residues D11, E70, and D142 contribute to the active site. Mg(2+) contacts are provided by D11, E70, and D142.

This sequence belongs to the RuvC family. Homodimer which binds Holliday junction (HJ) DNA. The HJ becomes 2-fold symmetrical on binding to RuvC with unstacked arms; it has a different conformation from HJ DNA in complex with RuvA. In the full resolvosome a probable DNA-RuvA(4)-RuvB(12)-RuvC(2) complex forms which resolves the HJ. Mg(2+) serves as cofactor.

The protein resides in the cytoplasm. It carries out the reaction Endonucleolytic cleavage at a junction such as a reciprocal single-stranded crossover between two homologous DNA duplexes (Holliday junction).. Its function is as follows. The RuvA-RuvB-RuvC complex processes Holliday junction (HJ) DNA during genetic recombination and DNA repair. Endonuclease that resolves HJ intermediates. Cleaves cruciform DNA by making single-stranded nicks across the HJ at symmetrical positions within the homologous arms, yielding a 5'-phosphate and a 3'-hydroxyl group; requires a central core of homology in the junction. The consensus cleavage sequence is 5'-(A/T)TT(C/G)-3'. Cleavage occurs on the 3'-side of the TT dinucleotide at the point of strand exchange. HJ branch migration catalyzed by RuvA-RuvB allows RuvC to scan DNA until it finds its consensus sequence, where it cleaves and resolves the cruciform DNA. The protein is Crossover junction endodeoxyribonuclease RuvC of Hydrogenovibrio crunogenus (strain DSM 25203 / XCL-2) (Thiomicrospira crunogena).